The following is a 443-amino-acid chain: ATP-dependent protease ATPase subunit HslU (443 aa).

ATP is bound by residues valine 18, 60-65, aspartate 256, glutamate 321, and arginine 393; that span reads GVGKTE.

Belongs to the ClpX chaperone family. HslU subfamily. As to quaternary structure, a double ring-shaped homohexamer of HslV is capped on each side by a ring-shaped HslU homohexamer. The assembly of the HslU/HslV complex is dependent on binding of ATP.

It is found in the cytoplasm. ATPase subunit of a proteasome-like degradation complex; this subunit has chaperone activity. The binding of ATP and its subsequent hydrolysis by HslU are essential for unfolding of protein substrates subsequently hydrolyzed by HslV. HslU recognizes the N-terminal part of its protein substrates and unfolds these before they are guided to HslV for hydrolysis. The polypeptide is ATP-dependent protease ATPase subunit HslU (Azoarcus sp. (strain BH72)).